Consider the following 483-residue polypeptide: MPLCIPQVLLALFLSVLIAQGEGSRRRATQAHSTTQPALLRLSDHLLANYKKGVRPVRDWRKPTLVSIDVIMYAILNVDEKNQVLTTYIWYRQFWTDEFLQWTPEDFDNVTKLSIPTDSIWVPDILINEFVDVGKSPSIPYVYVHHQGEVQNYKPLQLVTACSLDIYNFPFDVQNCSLTFTSWLHTIQDINISLWRTPEEVRSDKSIFINQGEWELLGVFTKFQEFSIETSNSYAEMKFYVVIRRRPLFYAVSLLLPSIFLMVVDIVGFCLPPDSGERVSFKITLLLGYSVFLIIVSDTLPATAIGTPLIGVYFVVCMALLVISLAETIFIVQLVHKQDLQRPVPDWLRHLVLDRIAWLLCLGEQPMAHRPPATFQANKTDDCSAMGNHCSHVGSPQDLEKTSRSRDSPLPPPREASLAVRGLLQELSSIRHSLEKRDEMREVARDWLRVGYVLDRLLFRIYLLAVLAYSITLVTLWSIWHYS.

Positions Met-1–Gly-23 are cleaved as a signal peptide. Topologically, residues Ser-24–Arg-246 are extracellular. Asn-109, Asn-175, and Asn-191 each carry an N-linked (GlcNAc...) asparagine glycan. Cysteines 162 and 176 form a disulfide. A helical membrane pass occupies residues Pro-247 to Pro-273. The Cytoplasmic portion of the chain corresponds to Asp-274–Arg-278. The helical transmembrane segment at Val-279–Ser-297 threads the bilayer. The Extracellular portion of the chain corresponds to Asp-298–Thr-307. Residues Pro-308–Ala-326 form a helical membrane-spanning segment. Residues Glu-327 to Arg-460 lie on the Cytoplasmic side of the membrane. Residues Val-393–Arg-414 are disordered. Basic and acidic residues predominate over residues Asp-398–Asp-407. Residues Ala-419 to Asp-455 form an HA-stretch; determines single-channel conductance in 5-HT3 receptors region. A helical membrane pass occupies residues Ile-461–Trp-480. At His-481–Ser-483 the chain is on the extracellular side.

Belongs to the ligand-gated ion channel (TC 1.A.9) family. 5-hydroxytryptamine receptor (TC 1.A.9.2) subfamily. HTR3A sub-subfamily. As to quaternary structure, forms homopentameric as well as heteropentameric serotonin-activated cation-selective channel complexes with HTR3B or HTR3C or HTR3D or HTR3E. The homomeric complex is functional but exhibits low conductance with modified voltage dependence, and decreased agonist and antagonist affinity. Heteropentameric complexes display properties which resemble that of neuronal serotonin-activated channels in vivo. Interacts with RIC3. As to expression, expressed in central and peripheral neurons.

It localises to the postsynaptic cell membrane. It is found in the cell membrane. The enzyme catalyses Na(+)(in) = Na(+)(out). It carries out the reaction K(+)(in) = K(+)(out). It catalyses the reaction Ca(2+)(in) = Ca(2+)(out). The catalysed reaction is Mg(2+)(in) = Mg(2+)(out). Functionally, forms serotonin (5-hydroxytryptamine/5-HT3)-activated cation-selective channel complexes, which when activated cause fast, depolarizing responses in neurons. The polypeptide is 5-hydroxytryptamine receptor 3A (Rattus norvegicus (Rat)).